Consider the following 353-residue polypeptide: UPF0283 membrane protein YcjF (353 aa).

The span at 1–19 shows a compositional bias: basic and acidic residues; it reads MSEPLKPRIDFAEPLKEEP. Positions 1-35 are disordered; it reads MSEPLKPRIDFAEPLKEEPTSAFKAQQTFSEAESR. The next 3 helical transmembrane spans lie at 70–90, 100–120, and 213–233; these read MVMG…IQWT, VALG…GSVV, and ESTL…FIAW.

This sequence belongs to the UPF0283 family.

Its subcellular location is the cell inner membrane. The sequence is that of UPF0283 membrane protein YcjF from Salmonella agona (strain SL483).